The primary structure comprises 386 residues: Putative F-box/kelch-repeat protein At3g17280 (386 aa).

One can recognise an F-box domain in the interval 1–48; the sequence is MTTISDLPYDLLPEILSRLPTKSIPKLKTTCKKWYALFKDPKFVEKKL. Kelch repeat units follow at residues 155–203 and 340–386; these read SYKI…LKES and RIYI…IVEV.

The polypeptide is Putative F-box/kelch-repeat protein At3g17280 (Arabidopsis thaliana (Mouse-ear cress)).